The primary structure comprises 1282 residues: Trafficking protein particle complex subunit 8 (1282 aa).

A disordered region spans residues 245–287; it reads TDAIAPGPNGASNQQSPSSPTSSVATISSTMPAVGSVSPNSHP. The segment covering 255–273 has biased composition (low complexity); it reads ASNQQSPSSPTSSVATISS.

Plays a role in endoplasmic reticulum to Golgi apparatus trafficking at a very early stage. Involved in collagen secretion. The sequence is that of Trafficking protein particle complex subunit 8 from Caenorhabditis elegans.